We begin with the raw amino-acid sequence, 623 residues long: Cell pattern formation-associated protein stuA (623 aa).

Residues 13–31 show a composition bias toward polar residues; it reads QHMQSAGQPQQPQTVTSGP. The disordered stretch occupies residues 13 to 111; that stretch reads QHMQSAGQPQ…DTTGQHPPPG (99 aa). Residues 115–221 enclose the HTH APSES-type domain; sequence RVTATLWEDE…HNIGALLYHP (107 aa). Residues 149–170 constitute a DNA-binding region (H-T-H motif); it reads GTKLLNVAGMTRGRRDGILKSE. 2 disordered regions span residues 232 to 270 and 332 to 623; these read AAAE…PQSS and ARSM…PRQR. A compositionally biased stretch (polar residues) spans 335 to 374; sequence MPTTPATTPPGSMQPYGSAQSFDGSRQQMYNAPSQQSPYP. The segment covering 396–408 has biased composition (low complexity); that stretch reads GPPSSRPSGSAPS. Basic and acidic residues predominate over residues 423–446; it reads EHGHQSHAGEEDGEHEQHDAEYTH. Residues 542–553 are compositionally biased toward low complexity; the sequence is APPADMANPMPN. The segment at 569 to 594 is nuclear localization domain; the sequence is KRGREGDDDLSRPVGDVPGMDMKRRK. Residues 570–579 are compositionally biased toward basic and acidic residues; sequence RGREGDDDLS.

This sequence belongs to the EFG1/PHD1/stuA family.

It is found in the nucleus. Transcription factor that regulates asexual reproduction. Binds the StuA-response elements (StRE) with the consensus sequence 5'-(A/T)CGCG(T/A)N(A/C)-3' at the promoters of target genes. Controls conidiation by positively regulating the expression of brlA and abaA. Positively regulates the cephalosporin biosynthesis gene cluster. Also involved hyphal fragmentation and cell wall integrity. This chain is Cell pattern formation-associated protein stuA, found in Hapsidospora chrysogenum (strain ATCC 11550 / CBS 779.69 / DSM 880 / IAM 14645 / JCM 23072 / IMI 49137) (Acremonium chrysogenum).